A 127-amino-acid polypeptide reads, in one-letter code: Protein ApaG (127 aa).

An ApaG domain is found at 3 to 127; sequence DDPRYRVEVE…FVLSVPRTLH (125 aa).

The polypeptide is Protein ApaG (Xanthomonas oryzae pv. oryzae (strain MAFF 311018)).